The following is a 60-amino-acid chain: Protein translocase subunit SecE (60 aa).

At 1-31 the chain is on the cytoplasmic side; that stretch reads MFARLIRYFQEARAELARVTWPTREQVVEGT. The chain crosses the membrane as a helical span at residues 32–52; sequence QAILLFTLAFMVILGLYDTVF. Over 53-60 the chain is Extracellular; the sequence is RFLIGLLR.

Belongs to the SecE/SEC61-gamma family. Component of the Sec protein translocase complex. Heterotrimer consisting of SecY, SecE and SecG subunits. The heterotrimers can form oligomers, although 1 heterotrimer is thought to be able to translocate proteins. Interacts with SecDF, and other proteins may be involved. The channel interacts with SecA via subunit SecY.

The protein resides in the cell inner membrane. Its function is as follows. Essential subunit of the protein translocation channel SecYEG. Clamps together the 2 halves of SecY. May contact the channel plug during translocation. The chain is Protein translocase subunit SecE from Thermus thermophilus (strain ATCC 27634 / DSM 579 / HB8).